Here is a 490-residue protein sequence, read N- to C-terminus: Betaine aldehyde dehydrogenase (490 aa).

Residues Ile27 and Asp93 each contribute to the K(+) site. 150-152 (GAW) serves as a coordination point for NAD(+). Lys162 (charge relay system) is an active-site residue. 176-179 (KPSE) contributes to the NAD(+) binding site. K(+) is bound at residue Val180. NAD(+) is bound at residue 230-233 (GTTT). A K(+)-binding site is contributed by Leu246. Glu252 acts as the Proton acceptor in catalysis. NAD(+)-binding residues include Gly254, Cys286, and Glu387. Cys286 (nucleophile) is an active-site residue. Residue Cys286 is modified to Cysteine sulfenic acid (-SOH). Residues Lys457 and Gly460 each contribute to the K(+) site. The Charge relay system role is filled by Glu464.

The protein belongs to the aldehyde dehydrogenase family. In terms of assembly, dimer of dimers. K(+) serves as cofactor.

The enzyme catalyses betaine aldehyde + NAD(+) + H2O = glycine betaine + NADH + 2 H(+). It functions in the pathway amine and polyamine biosynthesis; betaine biosynthesis via choline pathway; betaine from betaine aldehyde: step 1/1. Involved in the biosynthesis of the osmoprotectant glycine betaine. Catalyzes the irreversible oxidation of betaine aldehyde to the corresponding acid. This chain is Betaine aldehyde dehydrogenase, found in Pseudomonas putida (strain GB-1).